The following is a 221-amino-acid chain: Eukaryotic translation initiation factor 3 subunit K (221 aa).

Positions 46 to 207 (YDLEANLACL…NIKTKHITEK (162 aa)) constitute a PCI domain.

The protein belongs to the eIF-3 subunit K family. In terms of assembly, component of the eukaryotic translation initiation factor 3 (eIF-3) complex.

The protein resides in the cytoplasm. Functionally, component of the eukaryotic translation initiation factor 3 (eIF-3) complex, which is involved in protein synthesis of a specialized repertoire of mRNAs and, together with other initiation factors, stimulates binding of mRNA and methionyl-tRNAi to the 40S ribosome. The eIF-3 complex specifically targets and initiates translation of a subset of mRNAs involved in cell proliferation. In Aedes aegypti (Yellowfever mosquito), this protein is Eukaryotic translation initiation factor 3 subunit K.